The chain runs to 274 residues: Formamidopyrimidine-DNA glycosylase (274 aa).

Proline 2 (schiff-base intermediate with DNA) is an active-site residue. The Proton donor role is filled by glutamate 3. Lysine 58 serves as the catalytic Proton donor; for beta-elimination activity. DNA contacts are provided by histidine 91 and arginine 110. The segment at 238 to 272 (QVYDKTGQECVRCGTIIEKIQLGGRGTHFCPNCQR) adopts an FPG-type zinc-finger fold. The active-site Proton donor; for delta-elimination activity is arginine 262.

Belongs to the FPG family. Monomer. Zn(2+) is required as a cofactor.

The enzyme catalyses Hydrolysis of DNA containing ring-opened 7-methylguanine residues, releasing 2,6-diamino-4-hydroxy-5-(N-methyl)formamidopyrimidine.. It carries out the reaction 2'-deoxyribonucleotide-(2'-deoxyribose 5'-phosphate)-2'-deoxyribonucleotide-DNA = a 3'-end 2'-deoxyribonucleotide-(2,3-dehydro-2,3-deoxyribose 5'-phosphate)-DNA + a 5'-end 5'-phospho-2'-deoxyribonucleoside-DNA + H(+). Involved in base excision repair of DNA damaged by oxidation or by mutagenic agents. Acts as a DNA glycosylase that recognizes and removes damaged bases. Has a preference for oxidized purines, such as 7,8-dihydro-8-oxoguanine (8-oxoG). Has AP (apurinic/apyrimidinic) lyase activity and introduces nicks in the DNA strand. Cleaves the DNA backbone by beta-delta elimination to generate a single-strand break at the site of the removed base with both 3'- and 5'-phosphates. The polypeptide is Formamidopyrimidine-DNA glycosylase (Streptococcus pneumoniae serotype 4 (strain ATCC BAA-334 / TIGR4)).